The primary structure comprises 156 residues: Small ribosomal subunit protein uS7 (156 aa).

It belongs to the universal ribosomal protein uS7 family. In terms of assembly, part of the 30S ribosomal subunit. Contacts proteins S9 and S11.

Functionally, one of the primary rRNA binding proteins, it binds directly to 16S rRNA where it nucleates assembly of the head domain of the 30S subunit. Is located at the subunit interface close to the decoding center, probably blocks exit of the E-site tRNA. The polypeptide is Small ribosomal subunit protein uS7 (Phytoplasma mali (strain AT)).